A 438-amino-acid polypeptide reads, in one-letter code: Probable D-serine dehydratase (438 aa).

Lys114 is modified (N6-(pyridoxal phosphate)lysine).

This sequence belongs to the serine/threonine dehydratase family. DsdA subfamily. The cofactor is pyridoxal 5'-phosphate.

The catalysed reaction is D-serine = pyruvate + NH4(+). This chain is Probable D-serine dehydratase, found in Histophilus somni (strain 2336) (Haemophilus somnus).